Reading from the N-terminus, the 425-residue chain is Enolase (425 aa).

A (2R)-2-phosphoglycerate-binding site is contributed by Gln-164. Glu-208 serves as the catalytic Proton donor. Mg(2+) contacts are provided by Asp-243, Glu-286, and Asp-312. (2R)-2-phosphoglycerate-binding residues include Lys-337, Arg-366, Ser-367, and Lys-388. Lys-337 functions as the Proton acceptor in the catalytic mechanism.

The protein belongs to the enolase family. The cofactor is Mg(2+).

It localises to the cytoplasm. It is found in the secreted. Its subcellular location is the cell surface. The enzyme catalyses (2R)-2-phosphoglycerate = phosphoenolpyruvate + H2O. It functions in the pathway carbohydrate degradation; glycolysis; pyruvate from D-glyceraldehyde 3-phosphate: step 4/5. Catalyzes the reversible conversion of 2-phosphoglycerate (2-PG) into phosphoenolpyruvate (PEP). It is essential for the degradation of carbohydrates via glycolysis. This is Enolase from Methanococcus aeolicus (strain ATCC BAA-1280 / DSM 17508 / OCM 812 / Nankai-3).